The sequence spans 286 residues: Putative sugar uptake protein lin0215 (286 aa).

8 helical membrane passes run 4–26 (MIAL…FGGS), 33–55 (GMTL…VYTL), 114–136 (LRII…TSYA), 149–167 (GLIT…VVLI), 177–194 (AILP…IMTH), 207–226 (LLLI…MVHA), 230–252 (VGVA…GGIV), and 264–283 (LYVI…IGVA).

Belongs to the GRP transporter (TC 2.A.7.5) family.

The protein localises to the cell membrane. This Listeria innocua serovar 6a (strain ATCC BAA-680 / CLIP 11262) protein is Putative sugar uptake protein lin0215.